We begin with the raw amino-acid sequence, 377 residues long: Protein RecA (377 aa).

66–73 (GPESSGKT) is an ATP binding site. The interval 329 to 377 (VGVRPEEPTAEPGADAAVTSAAAATDDTAKTVSAPAAKTTKSKAAAAKS) is disordered. A compositionally biased stretch (low complexity) spans 342–377 (ADAAVTSAAAATDDTAKTVSAPAAKTTKSKAAAAKS).

The protein belongs to the RecA family.

It localises to the cytoplasm. Can catalyze the hydrolysis of ATP in the presence of single-stranded DNA, the ATP-dependent uptake of single-stranded DNA by duplex DNA, and the ATP-dependent hybridization of homologous single-stranded DNAs. It interacts with LexA causing its activation and leading to its autocatalytic cleavage. This is Protein RecA from Streptomyces avermitilis (strain ATCC 31267 / DSM 46492 / JCM 5070 / NBRC 14893 / NCIMB 12804 / NRRL 8165 / MA-4680).